Consider the following 284-residue polypeptide: 2-dehydro-3-deoxyphosphooctonate aldolase (284 aa).

This sequence belongs to the KdsA family.

The protein resides in the cytoplasm. It catalyses the reaction D-arabinose 5-phosphate + phosphoenolpyruvate + H2O = 3-deoxy-alpha-D-manno-2-octulosonate-8-phosphate + phosphate. Its pathway is carbohydrate biosynthesis; 3-deoxy-D-manno-octulosonate biosynthesis; 3-deoxy-D-manno-octulosonate from D-ribulose 5-phosphate: step 2/3. It functions in the pathway bacterial outer membrane biogenesis; lipopolysaccharide biosynthesis. In Photorhabdus laumondii subsp. laumondii (strain DSM 15139 / CIP 105565 / TT01) (Photorhabdus luminescens subsp. laumondii), this protein is 2-dehydro-3-deoxyphosphooctonate aldolase.